The sequence spans 218 residues: Probable septum site-determining protein MinC (218 aa).

This sequence belongs to the MinC family. As to quaternary structure, interacts with MinD and FtsZ.

Functionally, cell division inhibitor that blocks the formation of polar Z ring septums. Rapidly oscillates between the poles of the cell to destabilize FtsZ filaments that have formed before they mature into polar Z rings. Prevents FtsZ polymerization. This Kosmotoga olearia (strain ATCC BAA-1733 / DSM 21960 / TBF 19.5.1) protein is Probable septum site-determining protein MinC.